The chain runs to 783 residues: B-cell scaffold protein with ankyrin repeats (783 aa).

Positions 1–154 (MLPVASGTRG…GYISVIRQIL (154 aa)) are interaction with ITPR2. Residues 25 to 153 (NAKDILLLYE…DGYISVIRQI (129 aa)) form the TIR domain. One can recognise a DBB domain in the interval 199–326 (VLPGEIPCEK…EIPYYEFKHL (128 aa)). ANK repeat units lie at residues 341 to 370 (ELPT…ATRA) and 377 to 407 (DGSD…NTGR). 4 disordered regions span residues 422 to 521 (FSTY…AASQ), 538 to 586 (MERS…EDNE), 604 to 624 (SFII…PPKE), and 641 to 670 (RQSD…STRD). Over residues 444 to 479 (RNTDRSEEPERSVEMKEEEAGAEARRSLSEGERESS) the composition is skewed to basic and acidic residues. A compositionally biased stretch (pro residues) spans 505-515 (HCRPPLLPPRP). A compositionally biased stretch (basic and acidic residues) spans 549–565 (ARPETREESSREEKKEE). The span at 566–586 (AQEEEEEEENPYAFAETEDNE) shows a compositional bias: acidic residues. Pro residues predominate over residues 610–620 (PPAPTPRPTHI). A compositionally biased stretch (basic and acidic residues) spans 641 to 660 (RQSDGDKFYSLPKKPDKTRM). Y649 carries the phosphotyrosine modification.

In terms of assembly, interacts with LYN, ITPR1 and ITPR2. Post-translationally, phosphorylated on tyrosines upon BCR activation. In terms of tissue distribution, specifically expressed in spleen. Highly expressed in immature B-cells and recirculating B-cells, and at low levels in pro-B and pre-B cells.

In terms of biological role, involved in B-cell receptor (BCR)-induced Ca(2+) mobilization from intracellular stores. Promotes Lyn-mediated phosphorylation of IP3 receptors 1 and 2. In Mus musculus (Mouse), this protein is B-cell scaffold protein with ankyrin repeats (Bank1).